A 354-amino-acid chain; its full sequence is Transcription factor BHLH3 (354 aa).

The interval 124–143 (VAEEETSGDKALLHGGGGSS) is disordered. The segment at 178–191 (GTPSKNLMAERRRR) is basic motif. The 50-residue stretch at 178 to 227 (GTPSKNLMAERRRRKRLNDRLSMLRSIVPKISKMDRTSILGDTIDYVKEL) folds into the bHLH domain. Positions 192 to 227 (KRLNDRLSMLRSIVPKISKMDRTSILGDTIDYVKEL) are helix-loop-helix motif.

It belongs to the bHLH protein family. As to quaternary structure, interacts with LAX1. Phosphorylated by MAPK3 and MAPK6.

It localises to the nucleus. The protein localises to the cytoplasm. Functionally, transcription factor involved in defense responses that functions downstream of RAC1 and upstream of PAL1 and WRKY19 genes. The protein is Transcription factor BHLH3 of Oryza sativa subsp. japonica (Rice).